The chain runs to 251 residues: MKAFEFLYEDFQRGLTVVLDKGLPPKFVEDYLKVCGDYIDFVKFGWGTSAVIDRDVVKEKINYYKDWGIKVYPGGTLFEYAYSKGKFDEFLNECEKLGFEAVEISDGSSDISLEERKNAIKRAKDNGFMVLTEVGKKMPDKDKQLTIDDRIKLINFDLDAGADYVIIEGRESGKGIGLFDKEGKVKENELDVLAKNVDINKVIFEAPQKSQQVAFILKFGSSVNLANIAFDEVISLETLRRGLRGDTFGKV.

This sequence belongs to the phosphosulfolactate synthase family. Homotrimer. The cofactor is Mg(2+).

The catalysed reaction is (2R)-O-phospho-3-sulfolactate = phosphoenolpyruvate + sulfite + H(+). It functions in the pathway cofactor biosynthesis; coenzyme M biosynthesis; sulfoacetaldehyde from phosphoenolpyruvate and sulfite: step 1/4. In terms of biological role, catalyzes the addition of sulfite to phosphoenolpyruvate (PEP) to yield (2R)-phospho-3-sulfolactate (PSL). The sequence is that of Phosphosulfolactate synthase (comA) from Methanocaldococcus jannaschii (strain ATCC 43067 / DSM 2661 / JAL-1 / JCM 10045 / NBRC 100440) (Methanococcus jannaschii).